The primary structure comprises 158 residues: NAD(P)H-quinone oxidoreductase subunit O, chloroplastic (158 aa).

The transit peptide at 1 to 38 (MAFSATVSQLSSLSTISSSLPISSRRLPHRSLPQFTVK) directs the protein to the chloroplast. The interval 33–70 (PQFTVKAEAEKEKQSTQGKSDGEASPAATKTPKTLPKK) is disordered. Positions 56–70 (ASPAATKTPKTLPKK) are enriched in low complexity.

The protein belongs to the NDH complex subunit O family. Part of the chloroplast NDH complex, composed of a mixture of chloroplast and nucleus encoded subunits. Component of the NDH subcomplex A, at least composed of ndhH, ndhI, ndhJ, ndhK, ndhL, ndhM, ndhN and ndhO.

It localises to the plastid. The protein resides in the chloroplast thylakoid membrane. It carries out the reaction a plastoquinone + NADH + (n+1) H(+)(in) = a plastoquinol + NAD(+) + n H(+)(out). The enzyme catalyses a plastoquinone + NADPH + (n+1) H(+)(in) = a plastoquinol + NADP(+) + n H(+)(out). Functionally, NDH shuttles electrons from NAD(P)H:plastoquinone, via FMN and iron-sulfur (Fe-S) centers, to quinones in the photosynthetic chain and possibly in a chloroplast respiratory chain. The immediate electron acceptor for the enzyme in this species is believed to be plastoquinone. Couples the redox reaction to proton translocation, and thus conserves the redox energy in a proton gradient. This is NAD(P)H-quinone oxidoreductase subunit O, chloroplastic from Arabidopsis thaliana (Mouse-ear cress).